Consider the following 963-residue polypeptide: Protocadherin alpha-C1 (963 aa).

A signal peptide spans 1–18 (MVGWGVAVLCLWVSCGAA). Cadherin domains follow at residues 19 to 124 (AGQL…SPLF), 125 to 233 (PAGD…APVF), 234 to 340 (ERSV…APEL), 349 to 445 (VPED…TPSF), and 446 to 555 (PQPQ…YPVI). Over 19–683 (AGQLEYSVPE…GGQLSAQNLY (665 aa)) the chain is Extracellular. N38 carries N-linked (GlcNAc...) asparagine glycosylation. Residues N248 and N274 are each glycosylated (N-linked (GlcNAc...) asparagine). N562 is a glycosylation site (N-linked (GlcNAc...) asparagine). In terms of domain architecture, Cadherin 6 spans 570–667 (VPRSARTGHL…NSVPQLLPDF (98 aa)). The helical transmembrane segment at 684–704 (LVIALACISFLFLGCLLFFVC) threads the bilayer. At 705–963 (TKLHQSPGCC…GNSTTDNSDQ (259 aa)) the chain is on the cytoplasmic side. 4 PXXP repeats span residues 812-815 (PRQP), 845-848 (PGGP), 886-889 (PGNP), and 904-907 (PGSP). Residues 812-907 (PRQPNPDWRY…PDKFIIPGSP (96 aa)) are 4 X 4 AA repeats of P-X-X-P. Residues 844–902 (GPGGPDQQWPTVSSATPEPEAGEVSPPVGAGVNSNSWTFKYGPGNPKQSGPGELPDKFI) form a disordered region. Residues 914-963 (QEPANSQIDKSDFITFGKKEETKKKKKKKKGNKTQEKKEKGNSTTDNSDQ) are disordered. Positions 922 to 936 (DKSDFITFGKKEETK) are enriched in basic and acidic residues.

It is found in the cell membrane. Its function is as follows. Potential calcium-dependent cell-adhesion protein. May be involved in the establishment and maintenance of specific neuronal connections in the brain. This chain is Protocadherin alpha-C1 (PCDHAC1), found in Pan troglodytes (Chimpanzee).